The chain runs to 94 residues: PTS system galactitol-specific EIIB component (94 aa).

One can recognise a PTS EIIB type-2 domain in the interval 1 to 94 (MKRKIIVACG…QNKILTILQG (94 aa)). Cysteine 9 functions as the Phosphocysteine intermediate; for EIIB activity in the catalytic mechanism. Cysteine 9 is modified (phosphocysteine; by EIIA).

In terms of assembly, forms a complex with one each of subunit of GatA, GatB and 2 subunits of GatC.

The protein localises to the cytoplasm. The enzyme catalyses galactitol(out) + N(pros)-phospho-L-histidyl-[protein] = galactitol 1-phosphate(in) + L-histidyl-[protein]. In terms of biological role, the phosphoenolpyruvate-dependent sugar phosphotransferase system (PTS), a major carbohydrate active transport system, catalyzes the phosphorylation of incoming sugar substrates concomitant with their translocation across the cell membrane. The enzyme II complex composed of GatA, GatB and GatC is involved in galactitol transport. The protein is PTS system galactitol-specific EIIB component (gatB) of Escherichia coli O157:H7.